The primary structure comprises 188 residues: Translocon-associated protein subunit beta (188 aa).

The first 15 residues, 1–15, serve as a signal peptide directing secretion; sequence MKFSLFALLFVVVSC. Residues 16 to 151 are Lumenal-facing; the sequence is VDVGTQTRDA…EYDRRFAPKY (136 aa). N-linked (GlcNAc...) asparagine glycans are attached at residues Asn93 and Asn109. Residues 152–172 form a helical membrane-spanning segment; the sequence is TYFLVFFLIVAPTTLGSFLLF. At 173–188 the chain is on the cytoplasmic side; sequence QQSKARFPNVIKKKST.

Belongs to the TRAP-beta family. As to quaternary structure, heterotetramer of TRAP-alpha, TRAP-beta, TRAP-delta and TRAP-gamma.

Its subcellular location is the endoplasmic reticulum membrane. Functionally, TRAP proteins are part of a complex whose function is to bind calcium to the ER membrane and thereby regulate the retention of ER resident proteins. This is Translocon-associated protein subunit beta from Caenorhabditis elegans.